The chain runs to 350 residues: Galactokinase (350 aa).

Residue 14–17 (EHTD) participates in substrate binding. ATP-binding positions include S46 and 96–102 (GAGLSSS). Positions 102 and 134 each coordinate Mg(2+). D146 acts as the Proton acceptor in catalysis. Y196 contacts substrate.

Belongs to the GHMP kinase family. GalK subfamily.

Its subcellular location is the cytoplasm. The enzyme catalyses alpha-D-galactose + ATP = alpha-D-galactose 1-phosphate + ADP + H(+). The protein operates within carbohydrate metabolism; galactose metabolism. Its function is as follows. Catalyzes the transfer of the gamma-phosphate of ATP to D-galactose to form alpha-D-galactose-1-phosphate (Gal-1-P). This is Galactokinase from Thermotoga neapolitana (strain ATCC 49049 / DSM 4359 / NBRC 107923 / NS-E).